The primary structure comprises 391 residues: Phosphoglycerate kinase (391 aa).

Residues 21 to 23 (DLN), arginine 36, 59 to 62 (HLGR), arginine 113, and arginine 146 contribute to the substrate site. Residues lysine 197, glutamate 319, and 345–348 (GGDT) contribute to the ATP site.

The protein belongs to the phosphoglycerate kinase family. Monomer.

Its subcellular location is the cytoplasm. The enzyme catalyses (2R)-3-phosphoglycerate + ATP = (2R)-3-phospho-glyceroyl phosphate + ADP. The protein operates within carbohydrate degradation; glycolysis; pyruvate from D-glyceraldehyde 3-phosphate: step 2/5. The sequence is that of Phosphoglycerate kinase from Xanthomonas campestris pv. campestris (strain 8004).